A 316-amino-acid polypeptide reads, in one-letter code: tRNA dimethylallyltransferase (316 aa).

An ATP-binding site is contributed by 17–24; sequence GPTASGKT. 19–24 lines the substrate pocket; that stretch reads TASGKT. 4 interaction with substrate tRNA regions span residues 42-45, 166-170, 247-252, and 280-287; these read DSAL, QRLSR, RCVGYR, and KRQITWLR.

It belongs to the IPP transferase family. In terms of assembly, monomer. The cofactor is Mg(2+).

The enzyme catalyses adenosine(37) in tRNA + dimethylallyl diphosphate = N(6)-dimethylallyladenosine(37) in tRNA + diphosphate. Catalyzes the transfer of a dimethylallyl group onto the adenine at position 37 in tRNAs that read codons beginning with uridine, leading to the formation of N6-(dimethylallyl)adenosine (i(6)A). This chain is tRNA dimethylallyltransferase, found in Escherichia coli O81 (strain ED1a).